The primary structure comprises 308 residues: UDP-N-acetylenolpyruvoylglucosamine reductase (308 aa).

An FAD-binding PCMH-type domain is found at Arg35–Met200. Arg180 is an active-site residue. Residues Glu211 to Thr226 are compositionally biased toward basic and acidic residues. The tract at residues Glu211–Gly236 is disordered. Catalysis depends on Ser229, which acts as the Proton donor. Glu299 is an active-site residue.

The protein belongs to the MurB family. It depends on FAD as a cofactor.

It localises to the cytoplasm. It catalyses the reaction UDP-N-acetyl-alpha-D-muramate + NADP(+) = UDP-N-acetyl-3-O-(1-carboxyvinyl)-alpha-D-glucosamine + NADPH + H(+). The protein operates within cell wall biogenesis; peptidoglycan biosynthesis. Functionally, cell wall formation. In Rhodopseudomonas palustris (strain BisB18), this protein is UDP-N-acetylenolpyruvoylglucosamine reductase.